The chain runs to 499 residues: Probable malate:quinone oxidoreductase (499 aa).

The protein belongs to the MQO family. The cofactor is FAD.

The catalysed reaction is (S)-malate + a quinone = a quinol + oxaloacetate. It participates in carbohydrate metabolism; tricarboxylic acid cycle; oxaloacetate from (S)-malate (quinone route): step 1/1. This chain is Probable malate:quinone oxidoreductase, found in Exiguobacterium sp. (strain ATCC BAA-1283 / AT1b).